The primary structure comprises 155 residues: 2-C-methyl-D-erythritol 2,4-cyclodiphosphate synthase (155 aa).

Positions 8 and 10 each coordinate a divalent metal cation. 4-CDP-2-C-methyl-D-erythritol 2-phosphate-binding positions include 8–10 and 34–35; these read DVH and HS. Residue histidine 42 participates in a divalent metal cation binding. 4-CDP-2-C-methyl-D-erythritol 2-phosphate contacts are provided by residues 56-58, 61-65, 100-106, 132-135, phenylalanine 139, and lysine 142; these read DIG, FPDSD, AQKPKML, and TTEE.

This sequence belongs to the IspF family. Homotrimer. Requires a divalent metal cation as cofactor.

It carries out the reaction 4-CDP-2-C-methyl-D-erythritol 2-phosphate = 2-C-methyl-D-erythritol 2,4-cyclic diphosphate + CMP. The protein operates within isoprenoid biosynthesis; isopentenyl diphosphate biosynthesis via DXP pathway; isopentenyl diphosphate from 1-deoxy-D-xylulose 5-phosphate: step 4/6. Its function is as follows. Involved in the biosynthesis of isopentenyl diphosphate (IPP) and dimethylallyl diphosphate (DMAPP), two major building blocks of isoprenoid compounds. Catalyzes the conversion of 4-diphosphocytidyl-2-C-methyl-D-erythritol 2-phosphate (CDP-ME2P) to 2-C-methyl-D-erythritol 2,4-cyclodiphosphate (ME-CPP) with a corresponding release of cytidine 5-monophosphate (CMP). The sequence is that of 2-C-methyl-D-erythritol 2,4-cyclodiphosphate synthase from Clostridium botulinum (strain Kyoto / Type A2).